A 466-amino-acid polypeptide reads, in one-letter code: Cysteine--tRNA ligase (466 aa).

Cys-27 provides a ligand contact to Zn(2+). The 'HIGH' region motif lies at 29 to 39 (PTVYDDAHLGH). Cys-208, His-238, and Glu-242 together coordinate Zn(2+). Residues 270–274 (KMSKS) carry the 'KMSKS' region motif. Lys-273 contacts ATP.

Belongs to the class-I aminoacyl-tRNA synthetase family. Monomer. Requires Zn(2+) as cofactor.

The protein localises to the cytoplasm. It carries out the reaction tRNA(Cys) + L-cysteine + ATP = L-cysteinyl-tRNA(Cys) + AMP + diphosphate. The chain is Cysteine--tRNA ligase from Sulfurimonas denitrificans (strain ATCC 33889 / DSM 1251) (Thiomicrospira denitrificans (strain ATCC 33889 / DSM 1251)).